Here is a 428-residue protein sequence, read N- to C-terminus: Transcription factor bHLH91 (428 aa).

The bHLH domain maps to 210–259 (KRKNKPFTTERERRCHLNERYEALKLLIPSPSKGDRASILQDGIDYINEL). The disordered stretch occupies residues 278–320 (RHKNNEVDDNNNNKNLDDHGNEDDDDDDENMEKKPESDVIDQC). Acidic residues predominate over residues 297–307 (GNEDDDDDDEN).

As to quaternary structure, homodimer. As to expression, flowers.

It localises to the nucleus. The sequence is that of Transcription factor bHLH91 (BHLH91) from Arabidopsis thaliana (Mouse-ear cress).